Here is a 401-residue protein sequence, read N- to C-terminus: Nodal homolog 3-A (401 aa).

The N-terminal stretch at 1–18 (MAFLSLFLCLVFSSPLMA) is a signal peptide. A propeptide spanning residues 19 to 274 (MPPALQGRKA…KVNGFRRLRR (256 aa)) is cleaved from the precursor. 3 N-linked (GlcNAc...) asparagine glycosylation sites follow: asparagine 168, asparagine 337, and asparagine 344. 2 cysteine pairs are disulfide-bonded: cysteine 299–cysteine 365 and cysteine 328–cysteine 396.

It belongs to the TGF-beta family. In terms of assembly, monomer. The propeptide region interacts with bmp4 in a non-covalent manner. As to expression, expressed in the dorsal marginal region of late blastula, becoming restricted to the Spemann organizer at the early gastrula stage.

The protein localises to the secreted. Exhibits mesoderm-dorsalizing activity and neural-inducing activity, but lacks mesoderm-inducing activity. Regulates the expression of specific mesodermal and neural genes. Induces convergent extension movements at the embryonic midline by activating the fgf signaling pathway to induce t/bra expression in the organizer region. Acts with wnt11 to induce Spemann organizer cells and induce axis formation. The unprocessed protein antagonizes bmp-signaling. The protein is Nodal homolog 3-A of Xenopus tropicalis (Western clawed frog).